A 332-amino-acid chain; its full sequence is Torsin-1A (332 aa).

The first 20 residues, 1 to 20 (MKLGRAALGLLLLAPSVVQA), serve as a signal peptide directing secretion. The interaction with SNAPIN stretch occupies residues 91 to 251 (KPKKPLTLSL…VSVFNNKNSG (161 aa)). 102–109 (GWTGTGKN) provides a ligand contact to ATP. 2 N-linked (GlcNAc...) asparagine glycosylation sites follow: asparagine 143 and asparagine 158. The segment at 251-332 (GFWHSSLIDR…FTKLDYYYDD (82 aa)) is interaction with KLC1. The interaction with SYNE3 stretch occupies residues 312 to 332 (RVFSDKGCKTVFTKLDYYYDD).

This sequence belongs to the ClpA/ClpB family. Torsin subfamily. In terms of assembly, homohexamer. Interacts with TOR1B; the interaction may be specific of neural tissues. Interacts (ATP-bound) with TOR1AIP1 and TOR1AIP2; the interactions induce ATPase activity. Interacts with KLHL14; preferentially when ATP-free. Interacts with KLC1 (via TPR repeats); the interaction associates TOR1A with the kinesin oligomeric complex. Interacts with COPS4; the interaction associates TOR1A with the CSN complex. Interacts with SNAPIN; the interaction is direct and associates SNAPIN with the CSN complex. Interacts with STON2. Interacts (ATP-bound) with SYNE3 (via KASH domain); the interaction is required for SYNE3 nuclear envelope localization. Interacts with VIM; the interaction associates TOR1A with the cytoskeleton. Interacts with PLEC. Interacts (ATP-bound) with SLC6A3; regulates SLC6A3 transport to the plasma membrane. In terms of processing, N-glycosylated.

The protein resides in the endoplasmic reticulum lumen. It is found in the nucleus membrane. It localises to the cell projection. Its subcellular location is the growth cone. The protein localises to the cytoplasmic vesicle membrane. The protein resides in the cytoplasmic vesicle. It is found in the secretory vesicle. It localises to the synaptic vesicle. Its subcellular location is the cytoplasm. The protein localises to the cytoskeleton. The enzyme catalyses ATP + H2O = ADP + phosphate + H(+). Functionally, protein with chaperone functions important for the control of protein folding, processing, stability and localization as well as for the reduction of misfolded protein aggregates. Involved in the regulation of synaptic vesicle recycling, controls STON2 protein stability in collaboration with the COP9 signalosome complex (CSN). In the nucleus, may link the cytoskeleton with the nuclear envelope, this mechanism seems to be crucial for the control of nuclear polarity, cell movement and, specifically in neurons, nuclear envelope integrity. Participates in the cellular trafficking and may regulate the subcellular location of multipass membrane proteins such as the dopamine transporter SLC6A3, leading to the modulation of dopamine neurotransmission. In the endoplasmic reticulum, plays a role in the quality control of protein folding by increasing clearance of misfolded proteins such as SGCE variants or holding them in an intermediate state for proper refolding. May have a redundant function with TOR1B in non-neural tissues. The chain is Torsin-1A (TOR1A) from Macaca fascicularis (Crab-eating macaque).